Reading from the N-terminus, the 371-residue chain is COP9 signalosome complex subunit 5 (371 aa).

The 138-residue stretch at 51–188 (VKISAVALIK…IGAFRTYPEG (138 aa)) folds into the MPN domain. Residues H134, H136, and D147 each contribute to the Zn(2+) site. Positions 134-147 (HSHPGYGCWLSGID) match the JAMM motif motif. The span at 278-292 (NSSSKLKLKPTQPTT) shows a compositional bias: low complexity. 2 disordered regions span residues 278 to 333 (NSSS…SRIT) and 352 to 371 (TPLTQSVDDKSAQATVQGRY). The segment covering 293 to 313 (KGKETTEGSDKKLKKGEKEFS) has biased composition (basic and acidic residues). Over residues 323–333 (NKVTQESSRIT) the composition is skewed to polar residues.

This sequence belongs to the peptidase M67A family. CSN5 subfamily. Component of the COP9 signalosome (CSN) complex.

It localises to the cytoplasm. It is found in the nucleus. Its function is as follows. Catalytic Component of the COP9 signalosome (CSN) complex that acts as an regulator of the ubiquitin (Ubl) conjugation pathway by mediating the deneddylation of the cullin subunit of SCF-type E3 ubiquitin-protein ligase complexes. In Cryptococcus neoformans var. neoformans serotype D (strain B-3501A) (Filobasidiella neoformans), this protein is COP9 signalosome complex subunit 5 (RRI1).